Consider the following 268-residue polypeptide: Phosphatidylglycerol--prolipoprotein diacylglyceryl transferase (268 aa).

7 helical membrane-spanning segments follow: residues 23-43 (IGLR…RWLA), 62-82 (LLFN…VFFY), 97-117 (VWEG…AMIW), 132-152 (FVAP…FINL), 179-199 (SQLY…NIFI), 206-226 (ASVA…VEYV), and 241-261 (GQAL…WAYS). Arg145 is a binding site for a 1,2-diacyl-sn-glycero-3-phospho-(1'-sn-glycerol).

Belongs to the Lgt family.

It is found in the cell inner membrane. The catalysed reaction is L-cysteinyl-[prolipoprotein] + a 1,2-diacyl-sn-glycero-3-phospho-(1'-sn-glycerol) = an S-1,2-diacyl-sn-glyceryl-L-cysteinyl-[prolipoprotein] + sn-glycerol 1-phosphate + H(+). Its pathway is protein modification; lipoprotein biosynthesis (diacylglyceryl transfer). Catalyzes the transfer of the diacylglyceryl group from phosphatidylglycerol to the sulfhydryl group of the N-terminal cysteine of a prolipoprotein, the first step in the formation of mature lipoproteins. This chain is Phosphatidylglycerol--prolipoprotein diacylglyceryl transferase, found in Haemophilus influenzae (strain 86-028NP).